The sequence spans 117 residues: Immunoglobulin lambda variable 6-57 (117 aa).

An N-terminal signal peptide occupies residues 1–19; that stretch reads MAWAPLLLTLLAHCTGSWA. The tract at residues 20-44 is framework-1; the sequence is NFMLTQPHSVSESPGKTVTISCTGS. The Ig-like domain occupies 20–117; it reads NFMLTQPHSV…YYCQSYDSSN (98 aa). Cys41 and Cys110 are joined by a disulfide. Positions 45-52 are complementarity-determining-1; the sequence is SGSIASNY. Residues 53 to 69 are framework-2; it reads VQWYQQRPGSAPTTVIY. The interval 65–97 is disordered; it reads TTVIYEDNQRPSGVPDRFSGSIDSSSNSASLTI. The tract at residues 70 to 72 is complementarity-determining-2; that stretch reads EDN. The interval 73 to 110 is framework-3; that stretch reads QRPSGVPDRFSGSIDSSSNSASLTISGLKTEDEADYYC. Over residues 83–97 the composition is skewed to low complexity; sequence SGSIDSSSNSASLTI. The complementarity-determining-3 stretch occupies residues 111 to 117; it reads QSYDSSN.

As to quaternary structure, immunoglobulins are composed of two identical heavy chains and two identical light chains; disulfide-linked.

It is found in the secreted. Its subcellular location is the cell membrane. Functionally, v region of the variable domain of immunoglobulin light chains that participates in the antigen recognition. Immunoglobulins, also known as antibodies, are membrane-bound or secreted glycoproteins produced by B lymphocytes. In the recognition phase of humoral immunity, the membrane-bound immunoglobulins serve as receptors which, upon binding of a specific antigen, trigger the clonal expansion and differentiation of B lymphocytes into immunoglobulins-secreting plasma cells. Secreted immunoglobulins mediate the effector phase of humoral immunity, which results in the elimination of bound antigens. The antigen binding site is formed by the variable domain of one heavy chain, together with that of its associated light chain. Thus, each immunoglobulin has two antigen binding sites with remarkable affinity for a particular antigen. The variable domains are assembled by a process called V-(D)-J rearrangement and can then be subjected to somatic hypermutations which, after exposure to antigen and selection, allow affinity maturation for a particular antigen. The chain is Immunoglobulin lambda variable 6-57 from Homo sapiens (Human).